The chain runs to 402 residues: S-adenosylmethionine synthase (402 aa).

137-142 (GQGSAD) contacts ATP.

It belongs to the AdoMet synthase 2 family. Mg(2+) is required as a cofactor.

It carries out the reaction L-methionine + ATP + H2O = S-adenosyl-L-methionine + phosphate + diphosphate. It participates in amino-acid biosynthesis; S-adenosyl-L-methionine biosynthesis; S-adenosyl-L-methionine from L-methionine: step 1/1. In terms of biological role, catalyzes the formation of S-adenosylmethionine from methionine and ATP. The polypeptide is S-adenosylmethionine synthase (Pyrobaculum calidifontis (strain DSM 21063 / JCM 11548 / VA1)).